Consider the following 169-residue polypeptide: UPF0303 protein BruAb1_1406 (169 aa).

It belongs to the UPF0303 family.

The chain is UPF0303 protein BruAb1_1406 from Brucella abortus biovar 1 (strain 9-941).